Consider the following 741-residue polypeptide: Zinc finger and BTB domain-containing protein 20 (741 aa).

Over residues 1-17 (MLERKKPKTAENQKASE) the composition is skewed to basic and acidic residues. Residues 1–28 (MLERKKPKTAENQKASEENEITQPGGSS) form a disordered region. One can recognise a BTB domain in the interval 104 to 167 (CDVTVRIHGS…MYSGVLRVSQ (64 aa)). The disordered stretch occupies residues 203–235 (GIQDSGQDTPRGTPESGTSGQSSDTESGYLQSH). The span at 206–235 (DSGQDTPRGTPESGTSGQSSDTESGYLQSH) shows a compositional bias: polar residues. T211 is modified (phosphothreonine). A Glycyl lysine isopeptide (Lys-Gly) (interchain with G-Cter in SUMO1); alternate cross-link involves residue K330. K330 participates in a covalent cross-link: Glycyl lysine isopeptide (Lys-Gly) (interchain with G-Cter in SUMO2); alternate. The segment at 350 to 440 (RNESEECTED…SSPERSNESE (91 aa)) is disordered. Residue S353 is modified to Phosphoserine. Acidic residues predominate over residues 354-367 (EECTEDTDQAEGTE). Phosphothreonine is present on T357. Residue K371 forms a Glycyl lysine isopeptide (Lys-Gly) (interchain with G-Cter in SUMO2) linkage. Positions 404–423 (AEPAQPEQAAEAPAESSAQP) are enriched in low complexity. C2H2-type zinc fingers lie at residues 578–600 (YECT…MFVH), 606–628 (HQCS…MVTH), 634–656 (YQCS…MRLH), and 662–684 (YECY…VALH). Residues T690 and T695 each carry the phosphothreonine modification. The segment at 715-737 (YVCSVCPAKFDQIEQFNDHMRMH) adopts a C2H2-type 5 zinc-finger fold. Residue K723 forms a Glycyl lysine isopeptide (Lys-Gly) (interchain with G-Cter in SUMO2) linkage.

As to quaternary structure, can homodimerize. Binds to DNA. In terms of processing, sumoylated with SUMO1. In terms of tissue distribution, specifically expressed in early hippocampal neurons, cerebellar granule cells and gliogenic progenitors as well as in differentiated glia. Expressed in adult and aged myogenic satellite cells.

It is found in the nucleus. May be a transcription factor that may be involved in hematopoiesis, oncogenesis, and immune responses. Plays a role in postnatal myogenesis, may be involved in the regulation of satellite cells self-renewal. This Mus musculus (Mouse) protein is Zinc finger and BTB domain-containing protein 20 (Zbtb20).